A 3971-amino-acid chain; its full sequence is MYTSQFQTLVDVIRNRSNISDRGIRFIESDKIETFVSYRQLFDEAQGFLGYLQHIGIQPKQEIVFQIQENKSFVVAFWACLLGGMIPVPVSIGEDNDHKLKVWRIWNILNNPFLLASETVLDKMKKFAADHDLQDFHHQLIEKSDIIQDRIYDHPASQYEPEADELAFIQFSSGSTGDPKGVMLTHHNLIHNTCAIRNALAIDLKDTLLSWMPLTHDMGLIACHLVPALAGINQNLMPTELFIRRPILWMKKAHEHKASILSSPNFGYNYFLKFLKDNKSYDWDLSHIRVIANGAEPILPELCDEFLTRCAAFNMKRSAILNVYGLAEASVGATFSNIGERFVPVYLHRDHLNLGERAVEVSKEDQNCASFVEVGKPIDYCQIRICNEANEGLEDGFIGHIQIKGENVTQGYYNNPESTNRALTPDGWVKTGDLGFIRKGNLVVTGREKDIIFVNGKNVYPHDIERVAIELEDIDLGRVAACGVYDQETRSREIVLFAVYKKSADRFAPLVKDIKKHLYQRGGWSIKEILPIRKLPKTTSGKVKRYELAEQYESGKFALESTKIKEFLEGHSTEPVQTPIHEIETALLSIFSEVMDGKKIHLNDHYFDMGATSLQLSQIAERIEQKFGCELTVADLFTYPSIADLAAFLVENHSEIKQTDTAKPSRSSSKDIAIIGMSLNVPGASNKSDFWHLLENGEHGIREYPAPRVKDAIDYLRSIKSERNEKQFVRGGYLDEIDRFDYSFFGLAPKTAKFMDPNQRLFLQSAWHAIEDAGYAGDTISGSQLGVYVGYSKVGYDYERLLSANYPEELHHYIVGNLPSVLASRIAYFLNLKGPAVTVDTACSSSLVAVHMACKALLTGDCEMALAGGIRTSLLPMRIGLDMESSDGLTKTFSKDSDGTGSGEGVAAVLLKPLQAAIRDGDHIYGVIKGSAINQDGTTVGITAPSPAAQTEVIEMAWKDAGIAPETLSFIEAHGTGTKLGDPVEFNGLCKAFEKVTEKKQFCAIGSVKANIGHLFEAAGIVGLIKSALMLNHKKIPPLAHFNKPNPLIPFHSSPFYVNQEVMDFTPEDRPLRGGISSFGFSGTNAHVVLEEYTPESEYAPEDGNDPHLFVLSAHTEASLYELTHQYRQYISDDSQSSLRSICYTASTGRAHLDYCLAMIVSSNQELIDKLTSLIQGERNLPQVHFGYKNIKEMQPAEKDNLSKQISDLMQHRPCTKDERITWLNRIAELYVQRAVIDWRAVYSNEVVQKTPLPLYPFERNRCWVEAVYESAKERKEKGEVALDINHTKTHIESFLKTVISNASGIRADEIDSNAHFIGFGLDSIMLTQVKKAIADEFNVDIPMERFFDTMNNIESVVDYLAENVPSAASTPPQESVTAQEELVISGAQPELEHQEHMLDKIIASQNQLIQQTLQAQLDSFNLLRNNSHFVSKESEISQDKTSLSPKSVTAKKNSAQEAKPYIPFQRQTLNEQVNYTPQQRQYLESFIEKYVDKTKGSKQYTDETRFAHANNRNLSSFRSYWKEMVYPIIAERSDGSRMWDIDGNEYIDITMGFGVNLFGHHPSFITQTVVDSTHSALPPLGPMSNVAGEVADRIRACTGVERVAFYNSGTEAVMVALRLARAATGRTKVVVFAGSYHGTFDGVLGVANTKGGAEPANPLAPGIPQSFMNDLIILHYNHPDSLDVIRNLGNELAAVLVEPVQSRRPDLQPESFLKELRAITQQSGTALIMDEIITGFRIGLGGAQEWFDIQADLVTYGKIIGGGQPLGIVAGKAEFMNTIDGGTWQYGDDSYPTDEAKRTFVAGTFNTHPLTMRMSLAVLRYLQAEGETLYERLNQKTTYLVDQLNSYFEQSQVPIRMVQFGSLFRFVSSVDNDLFFYHLNYKGVYVWEGRNCFLSTAHTSDDIAYIIQAVQETVKDLRRGGFIPEGPDSPNDGGHKEPETYELSPEQKQLAVVSQYGNDASAALNQSIMLKVKGAVQHTLLKQAVRNIVKRHDALRTVIHVDDEVQQVQARINVEIPIIDFTGYPNEQRESEVQKWLTEDAKRPFHFHEQKPLFRVHVLTSKQDEHLIVLTFHHIIADGWSIAVFVQELESTYAAIVQGSPLPSHEVVSFRQYLDWQQAQIENGHYEEGIRYWRQYLSEPIPQAILTSMSSSRYPHGYEGDRYTVTLDRPLSKAIKSLSIRMKNSVFATILGAFHLFLQQLTKQAGLVIGIPTAGQLHMKQPMLVGNCVNMVPVKNTASSESTLADYLGHMKENMDQVMRHQDVPMTLVASQLPHDQMPDMRIIFNLDRPFRKLHFGQMEAELIAYPIKCISYDLFLNVTEFDQEYVLDFDFNTSVISSEIMNKWGTGFVNLLKKMVEGDSASLDSLKMFSKEDQHDLLELYADHQLRISSTLDHKGVRAVYEEPENETELQIAQIWAELLGLEKVGRSDHFLSLGGNSLKATLMLSKIQQTFNQKVSIGQFFSHQTVKELANFIRGEKNVKYPPMKPVEQKAFYRTSPAQQRVYFLHQMEPNQVSQNMFGQISIIGKYDEKALIASLQQVMQRHEAFRTSFHIIDGEIVQQIAGELDFNVRVHSMDREEFEAYADGYVKPFRLEQAPLVRAELIKVDNEQAELLIDMHHIISDGYSMSILTNELFALYHGNPLPEIPFEYKDFAEWQNQLLIGEVMEQQEEYWLEQFKQEVPILQLPADGSRAMEWSSEGQRVTCSLQSSLIRSLQEMAQQKGTTLYMVLLAAYNVLLHKYTGQEDIVVGTPVSGRNQPNIESMIGIFIQTMGIRTKPQANKRFTDYLDEVKRQTLDAFENQDYPFDWLVEKVNVQRETTGKSLFNTMFVYQNIEFQEIHQDGCTFRVKERNPGVSLYDLMLTIEDAEKQLDIHFDFNPNQFEQETIEQIIRHYTSLLDSLVKEPEKSLSSVPMLSDIERHQLLMGCNDTETPFPHNDTVCQWFETQAEQRPDDEAVIFGNERCTYGQLNERVNQLARTLRTKGVQADQFVAIICPHRIELIVGILAVLKAGGAYVPIDPEYPEDRIQYMLKDSEAKIVLAQLDLHKHLTFDADVVLLDEESSYHEDRSNLEPTCGANDLAYMIYTSGSTGNPKGVLIEHRGLANYIEWAKEVYVNDEKTNFPLYSSISFDLTVTSIFTPLVTGNTIIVFDGEDKSAVLSTIMQDPRIDIIKLTPAHLHVLKEMKIADGTTIRKMIVGGENLSTRLAQSVSEQFKGQLDIFNEYGPTEAVVGCMIYRYDTKRDRREFVPIGSPAANTSIYVLDASMNLVPVGVPGEMYIGGAGVARGYWNRPDLTAEKFVHNPFAPGTIMYKTGDLAKRLRDGNLIYLGRIDEQVKIRGHRIELGEVEAAMHKVEAVQKAVVLAREEEDGLQQLCAYYVSNKPITIAEIREQLSLELPDYMVPSHYIQLEQLPLTSNGKINRKALPAPEVSLEQIAEYVPPGNEVESKLAVLWQEMLGIHRVGIKHNFFDLGGNSIRATALAARIHKELDVNLSVKDIFKFPTIEQLANMALRMEKIRYVSIPSAQKISYYPVSSAQKRMYLLSHTEGGELTYNMTGAMSVEGAIDLERLTAAFQKLIERHEVLRTSFELYEGEPAQRIHPSIEFTIEQIQAREEEVEDHVLDFIKSFDLAKPPLMRVGLIELTPEKHVLLVDMHHIISDGVSMNILMKDLNQFYKGIEPDPLPIQYKDYAVWQQTEAQRQNIKKQEAYWLNRFHDEIPVLDMPTDYERPAIRDYEGESFEFLIPIELKQRLSQMEEATGTTLYMILMAAYTILLSKYSGQEDIVVGTPVSGRSHMDVESVVGMFVNTLVIRNHPAGRKIFEDYLNEVKENMLNAYQNQDYPLEELIQHVHLLKDSSRNPLFDTMFVLQNLDQVELNLDSLRFTPYKLHHTVAKFDLTLSIQTDQDKHHGLFEYSKKLFKKSRIEALSKDYLHILSVISQQPSIQIEHIELSGSTAEDDNLIHSIELNF.

Residues 160-479 are acyl-CoA ligase; the sequence is EPEADELAFI…ELEDIDLGRV (320 aa). A Carrier 1 domain is found at 578–653; that stretch reads TPIHEIETAL…DLAAFLVENH (76 aa). Residue S613 is modified to O-(pantetheine 4'-phosphoryl)serine. Residues 669-1092 form the Ketosynthase family 3 (KS3) domain; it reads SKDIAIIGMS…GTNAHVVLEE (424 aa). Catalysis depends on for beta-ketoacyl synthase activity residues C843, H974, and H1014. Residues 1290-1365 enclose the Carrier 2 domain; it reads THIESFLKTV…SVVDYLAENV (76 aa). O-(pantetheine 4'-phosphoryl)serine is present on S1324. The interval 1434–1456 is disordered; it reads ESEISQDKTSLSPKSVTAKKNSA. A compositionally biased stretch (polar residues) spans 1440–1456; sequence DKTSLSPKSVTAKKNSA. The segment at 1529–1856 is GSA-AT; the sequence is IIAERSDGSR…SYFEQSQVPI (328 aa). An N6-(pyridoxal phosphate)lysine modification is found at K1759. Residues 1921-1942 are disordered; it reads GGFIPEGPDSPNDGGHKEPETY. A condensation 1 region spans residues 1938–2240; that stretch reads EPETYELSPE…NMVPVKNTAS (303 aa). The region spanning 2405–2480 is the Carrier 3 domain; sequence EPENETELQI…ELANFIRGEK (76 aa). S2440 bears the O-(pantetheine 4'-phosphoryl)serine mark. A condensation 2 region spans residues 2492-2781; the sequence is QKAFYRTSPA…QTMGIRTKPQ (290 aa). The segment at 2937-3823 is domain 1 (asparagine-activating); that stretch reads PHNDTVCQWF…RNHPAGRKIF (887 aa). Residues 2967–3364 form an adenylation 1 region; it reads TYGQLNERVN…KVEAVQKAVV (398 aa). The Carrier 4 domain occupies 3442–3517; the sequence is PPGNEVESKL…QLANMALRME (76 aa). S3477 carries the post-translational modification O-(pantetheine 4'-phosphoryl)serine. Positions 3529–3818 are condensation 3; that stretch reads KISYYPVSSA…NTLVIRNHPA (290 aa).

The protein belongs to the ATP-dependent AMP-binding enzyme family. It depends on pyridoxal 5'-phosphate as a cofactor. Pantetheine 4'-phosphate serves as cofactor.

In terms of biological role, this protein is a multifunctional enzyme, able to activate a long chain fatty acid and link it with the amino acid Asn as part of the synthesis of mycosubtilin. The activation sites consist of individual domains. The protein is Mycosubtilin synthase subunit A (mycA) of Bacillus subtilis.